The primary structure comprises 176 residues: Transcriptional repressor NrdR (176 aa).

Residues 3 to 34 (CPFCQHTDSRVLESRSAEAGQSVRRRRECLQC) fold into a zinc finger. Residues 49–139 (ITVIKRNQDR…VYRQFRGIRD (91 aa)) enclose the ATP-cone domain. Residues 151–176 (GDGPLPSVLDEPYEDTAQPTIMISPQ) form a disordered region. A compositionally biased stretch (polar residues) spans 167-176 (AQPTIMISPQ).

This sequence belongs to the NrdR family. Zn(2+) is required as a cofactor.

In terms of biological role, negatively regulates transcription of bacterial ribonucleotide reductase nrd genes and operons by binding to NrdR-boxes. In Acaryochloris marina (strain MBIC 11017), this protein is Transcriptional repressor NrdR.